Reading from the N-terminus, the 354-residue chain is MLELDFEQQLGDLYLQVNTQLPTEGITAVFGLSGAGKTSLINVIAGLIRPRKGRIVLNDHVLVDIEKGICLSPEQRRIGYVFQDARLFPHYRVKGNLQYGMSPEMKPEFDSIVSLLGIEHLLSRFPLTLSGGEKQRVAIGRALLTAPDLLLMDEPLASLDLPRKRELLPYLEKLSGEVNIPILYVSHNLDEILRLAENVLVVDNGKVRATGKLEEVWSSSALRLWLQKETLSSILNVSMVEHHNRYEMTAVALADQALWLPKMDVQPGTDLRIRIDASDVSLVLEPPRGSSIRNILAVKVVEFFDDNGHVDVKLVLSGHYLWARITPWARDELNLRSGQWLYAQIKSVSFHRQL.

The 229-residue stretch at 1-229 (MLELDFEQQL…SALRLWLQKE (229 aa)) folds into the ABC transporter domain. 31-38 (GLSGAGKT) is a binding site for ATP. The Mop domain occupies 289 to 354 (GSSIRNILAV…IKSVSFHRQL (66 aa)).

It belongs to the ABC transporter superfamily. Molybdate importer (TC 3.A.1.8) family. The complex is composed of two ATP-binding proteins (ModC), two transmembrane proteins (ModB) and a solute-binding protein (ModA).

Its subcellular location is the cell inner membrane. The catalysed reaction is molybdate(out) + ATP + H2O = molybdate(in) + ADP + phosphate + H(+). Part of the ABC transporter complex ModABC involved in molybdenum import. Responsible for energy coupling to the transport system. The polypeptide is Molybdenum import ATP-binding protein ModC (Photorhabdus laumondii subsp. laumondii (strain DSM 15139 / CIP 105565 / TT01) (Photorhabdus luminescens subsp. laumondii)).